A 174-amino-acid polypeptide reads, in one-letter code: Large ribosomal subunit protein bL12cz (174 aa).

The N-terminal 45 residues, 1 to 45 (MASTTFSSAFSILSLPSSSPSPPPSPPRTLPVANRRRRAAAVAST), are a transit peptide targeting the chloroplast. The tract at residues 1-46 (MASTTFSSAFSILSLPSSSPSPPPSPPRTLPVANRRRRAAAVASTA) is disordered. Residues 7–18 (SSAFSILSLPSS) show a composition bias toward low complexity. Over residues 19–29 (SPSPPPSPPRT) the composition is skewed to pro residues.

It belongs to the bacterial ribosomal protein bL12 family.

It localises to the plastid. Its subcellular location is the chloroplast. This is Large ribosomal subunit protein bL12cz (RPL12-1) from Secale cereale (Rye).